A 492-amino-acid polypeptide reads, in one-letter code: NAD(P)H-quinone oxidoreductase subunit 2 A, chloroplastic (492 aa).

Helical transmembrane passes span Leu-6 to Leu-26, Ile-39 to Phe-59, Ile-81 to Ile-101, Met-106 to Cys-126, Leu-131 to Tyr-151, Tyr-165 to Gly-185, Pro-209 to Ala-229, Trp-277 to Ile-297, Met-305 to Asp-325, Tyr-336 to Leu-356, Ala-377 to Phe-397, Leu-400 to Leu-420, and Phe-464 to Ile-484.

The protein belongs to the complex I subunit 2 family. NDH is composed of at least 16 different subunits, 5 of which are encoded in the nucleus.

It localises to the plastid. The protein localises to the chloroplast thylakoid membrane. It catalyses the reaction a plastoquinone + NADH + (n+1) H(+)(in) = a plastoquinol + NAD(+) + n H(+)(out). The catalysed reaction is a plastoquinone + NADPH + (n+1) H(+)(in) = a plastoquinol + NADP(+) + n H(+)(out). In terms of biological role, NDH shuttles electrons from NAD(P)H:plastoquinone, via FMN and iron-sulfur (Fe-S) centers, to quinones in the photosynthetic chain and possibly in a chloroplast respiratory chain. The immediate electron acceptor for the enzyme in this species is believed to be plastoquinone. Couples the redox reaction to proton translocation, and thus conserves the redox energy in a proton gradient. The sequence is that of NAD(P)H-quinone oxidoreductase subunit 2 A, chloroplastic from Phaseolus vulgaris (Kidney bean).